A 256-amino-acid polypeptide reads, in one-letter code: Late embryogenesis abundant protein 32 (256 aa).

Basic and acidic residues predominate over residues 1–14 (MSQEQPRRPREPVK). The interval 1–20 (MSQEQPRRPREPVKYGDVFE) is disordered. The short motif at 5–9 (QPRRP) is the Nuclear localization signal (NLS) element. SMP domains follow at residues 13–66 (VKYG…TTNI), 130–187 (ITIG…HNAT), and 195–253 (IKLR…LNER).

Belongs to the LEA type SMP family. Embryo specific, only in dry mature seeds. Expressed at low levels.

It localises to the cytoplasm. The protein resides in the nucleus. LEA proteins are late embryonic proteins abundant in higher plant seed embryos. The function of those proteins is not known. The chain is Late embryogenesis abundant protein 32 from Arabidopsis thaliana (Mouse-ear cress).